Consider the following 411-residue polypeptide: Ribose-phosphate pyrophosphokinase 3, chloroplastic (411 aa).

Residues 1 to 39 (MAAISPANATTAASLSLPQFSSTSSSLSSSSSPSFLNFK) constitute a chloroplast transit peptide. Mg(2+) contacts are provided by Asp-231 and His-233. A binding of phosphoribosylpyrophosphate region spans residues 314-329 (GRHVVIVDDLVQSGGT).

The protein belongs to the ribose-phosphate pyrophosphokinase family.

Its subcellular location is the plastid. It is found in the chloroplast. The catalysed reaction is D-ribose 5-phosphate + ATP = 5-phospho-alpha-D-ribose 1-diphosphate + AMP + H(+). The protein is Ribose-phosphate pyrophosphokinase 3, chloroplastic (PRS3) of Arabidopsis thaliana (Mouse-ear cress).